Reading from the N-terminus, the 388-residue chain is Putative [LysW]-aminoadipate semialdehyde/glutamate semialdehyde transaminase (388 aa).

Residues 100–101 and Phe127 each bind pyridoxal 5'-phosphate; that span reads GT. Residue Arg130 participates in substrate binding. Position 211–214 (211–214) interacts with pyridoxal 5'-phosphate; the sequence is DEIQ. Residue Lys240 is modified to N6-(pyridoxal phosphate)lysine. Ser268 provides a ligand contact to substrate. Pyridoxal 5'-phosphate is bound at residue Thr269.

Belongs to the class-III pyridoxal-phosphate-dependent aminotransferase family. LysJ subfamily. Homodimer. Requires pyridoxal 5'-phosphate as cofactor.

Its subcellular location is the cytoplasm. The enzyme catalyses [amino-group carrier protein]-C-terminal-gamma-(L-lysyl)-L-glutamate + 2-oxoglutarate = [amino-group carrier protein]-C-terminal-N-(1-carboxy-5-oxopentan-1-yl)-L-glutamine + L-glutamate. It carries out the reaction [amino-group carrier protein]-C-terminal-gamma-(L-ornithyl)-L-glutamate + 2-oxoglutarate = [amino-group carrier protein]-C-terminal-gamma-(L-glutamyl-5-semialdehyde)-L-glutamate + L-glutamate. The protein operates within amino-acid biosynthesis; L-lysine biosynthesis via AAA pathway; L-lysine from L-alpha-aminoadipate (Thermus route): step 4/5. Its pathway is amino-acid biosynthesis; L-arginine biosynthesis. Functionally, involved in both the arginine and lysine biosynthetic pathways. This Aeropyrum pernix (strain ATCC 700893 / DSM 11879 / JCM 9820 / NBRC 100138 / K1) protein is Putative [LysW]-aminoadipate semialdehyde/glutamate semialdehyde transaminase.